Consider the following 66-residue polypeptide: Jindongenin-1a (66 aa).

Residues 1–22 (MFTLKKPLLLLFFLGTVSLSLC) form the signal peptide. The propeptide occupies 23 to 40 (EQERAADDDEGEVIEEEV). The cysteines at positions 60 and 66 are disulfide-linked.

Expressed by the skin glands.

It localises to the secreted. Displays broad-spectrum antibacterial activity against a range of Gram-positive and Gram-negative bacteria. Also displays antifungal activity against C.albicans ATCC 2002. Has low hemolytic activity, low cytotoxicity and low antioxidant activity. The chain is Jindongenin-1a from Amolops jingdongensis (Chinese torrent frog).